Here is a 92-residue protein sequence, read N- to C-terminus: Small ribosomal subunit protein bS6 (92 aa).

Belongs to the bacterial ribosomal protein bS6 family.

Functionally, binds together with bS18 to 16S ribosomal RNA. This chain is Small ribosomal subunit protein bS6, found in Clostridioides difficile (strain 630) (Peptoclostridium difficile).